A 658-amino-acid chain; its full sequence is NADH-ubiquinone oxidoreductase chain 5 (658 aa).

17 consecutive transmembrane segments (helical) span residues 4–23 (TLIVLPLLGSISSGFFGRKI), 30–52 (IITCSSVILTTLLALLAFIEVGI), 81–103 (LTVSMLIPVLIVSSLVHIYSISY), 112–129 (RFFSYLSLFTFMMIILVT), 133–155 (YLLMFVGWEGVGICSYLLINFWF), 168–190 (LLTNRVGDCFLTIGIFAMLWSFG), 200–222 (LAPYYNENIITMIGICLVIGATA), 243–262 (VSALIHAATMVTAGVYLLMR), 272–294 (TVLIICLWLGAITTVFSSLIGLF), 301–319 (VIAYSTMSQLGMMVIGIGL), 329–351 (LVNHAFYKALLFLGAGAVIHSVA), 364–386 (PFLPLTYSVMLIASLSLVAVPFM), 409–431 (IVYFIATIGAMFTTLYSAKVLYL), 452–471 (LFLNIPLIILAVFSIFFGFL), 505–527 (VPVLFKLLPFFFTISLSILSILY), 607–629 (LSTGVVTTYALYILMGLMFYIST), and 639–656 (LLILIIFSLFVILNNKLL).

Belongs to the complex I subunit 5 family.

The protein resides in the mitochondrion inner membrane. The catalysed reaction is a ubiquinone + NADH + 5 H(+)(in) = a ubiquinol + NAD(+) + 4 H(+)(out). Functionally, core subunit of the mitochondrial membrane respiratory chain NADH dehydrogenase (Complex I) that is believed to belong to the minimal assembly required for catalysis. Complex I functions in the transfer of electrons from NADH to the respiratory chain. The immediate electron acceptor for the enzyme is believed to be ubiquinone. This Talaromyces marneffei (Penicillium marneffei) protein is NADH-ubiquinone oxidoreductase chain 5 (nad5).